The sequence spans 201 residues: ADP-ribosylation factor-like protein 4D (201 aa).

Gly2 is lipidated: N-myristoyl glycine. Residues 28–35, 76–80, and 135–138 each bind GTP; these read GLDSAGKT, DVGGQ, and NKQD.

Belongs to the small GTPase superfamily. Arf family. As to quaternary structure, interacts with CYTH2; the interaction is direct and ARL4D GTP-dependent. Does not interact with ARL4D.

The protein localises to the nucleus. The protein resides in the nucleolus. Its subcellular location is the cell membrane. It localises to the cytoplasm. In terms of biological role, small GTP-binding protein which cycles between an inactive GDP-bound and an active GTP-bound form, and the rate of cycling is regulated by guanine nucleotide exchange factors (GEF) and GTPase-activating proteins (GAP). GTP-binding protein that does not act as an allosteric activator of the cholera toxin catalytic subunit. Recruits CYTH1, CYTH2, CYTH3 and CYTH4 to the plasma membrane in GDP-bound form. The chain is ADP-ribosylation factor-like protein 4D (ARL4D) from Homo sapiens (Human).